The sequence spans 279 residues: Secreted RxLR effector protein 90 (279 aa).

A signal peptide spans 1–19 (MKSAAAFATFLTLSVFVAT). The short motif at 29–46 (RGLRSLADNQSTESSEGR) is the RxLR-dEER element. Disordered regions lie at residues 29–53 (RGLRSLADNQSTESSEGRKDHYNHH) and 135–176 (ATPA…NLAG). An N-linked (GlcNAc...) asparagine glycan is attached at asparagine 37. Residues 135–146 (ATPAPTTSVPSS) are compositionally biased toward low complexity. Positions 147–163 (LVNTDTSDNQLPTTPVA) are enriched in polar residues. The span at 166–176 (QGGGIGSNLAG) shows a compositional bias: gly residues. Asparagine 217 is a glycosylation site (N-linked (GlcNAc...) asparagine).

It belongs to the RxLR effector family.

Its subcellular location is the secreted. The protein resides in the host cell membrane. Secreted effector that completely suppresses the host cell death induced by cell death-inducing proteins. The chain is Secreted RxLR effector protein 90 from Plasmopara viticola (Downy mildew of grapevine).